A 185-amino-acid polypeptide reads, in one-letter code: Elongation factor P (185 aa).

The protein belongs to the elongation factor P family.

The protein resides in the cytoplasm. It functions in the pathway protein biosynthesis; polypeptide chain elongation. In terms of biological role, involved in peptide bond synthesis. Stimulates efficient translation and peptide-bond synthesis on native or reconstituted 70S ribosomes in vitro. Probably functions indirectly by altering the affinity of the ribosome for aminoacyl-tRNA, thus increasing their reactivity as acceptors for peptidyl transferase. The chain is Elongation factor P from Carboxydothermus hydrogenoformans (strain ATCC BAA-161 / DSM 6008 / Z-2901).